Here is a 434-residue protein sequence, read N- to C-terminus: Eukaryotic translation initiation factor 3 subunit E (434 aa).

In terms of domain architecture, PCI spans 219–392 (FFNHPKGRDL…GHVVMGTQPL (174 aa)).

It belongs to the eIF-3 subunit E family. Component of the eukaryotic translation initiation factor 3 (eIF-3) complex. The eIF-3 complex interacts with pix. Interacts with mxt.

The protein resides in the cytoplasm. Its function is as follows. Component of the eukaryotic translation initiation factor 3 (eIF-3) complex, which is involved in protein synthesis of a specialized repertoire of mRNAs and, together with other initiation factors, stimulates binding of mRNA and methionyl-tRNAi to the 40S ribosome. The eIF-3 complex specifically targets and initiates translation of a subset of mRNAs involved in cell proliferation. This chain is Eukaryotic translation initiation factor 3 subunit E (eIF3-S6), found in Drosophila pseudoobscura pseudoobscura (Fruit fly).